Here is a 416-residue protein sequence, read N- to C-terminus: Secreted RxLR effector protein 25 (416 aa).

The signal sequence occupies residues 1 to 20 (MRSWLLLLVGLSSYFALSTS). The RxLR-dEER motif lies at 49-88 (RKLRAPGGDTNTLKDSGKARREKKVWKLFCRVFLQLDDEK).

This sequence belongs to the RxLR effector family.

It localises to the secreted. The protein resides in the host cytoplasm. The protein localises to the host nucleus. In terms of biological role, effector that partially suppresses the tobacco programmed cell death induced by cell death-inducing proteins. The protein is Secreted RxLR effector protein 25 of Plasmopara viticola (Downy mildew of grapevine).